The chain runs to 427 residues: MIKVNLDHTDININKVADLNKIKEIHQMIFNKTGKGNDFLGWLNWPVNFNKTEYEQMKLVANDLKNQIEVLVVIGIGGSYLGCRAADEMIRGLYHQNKVELIYTGNTMSSTYIYQVVEYLKNKNFGICVISKSGTTTEPGISFRVFEKLLVDKVGLEKAKSLIVAITDKNKGALKQLAEKKGYQTFVIPNDIGGRFSVLTPVGIFPLLVSGINTDKIFQGALKAKNDLINDDLSNQAYKYAVVRNYLYNQGYKTEALISYELQLQMLTEWWKQLFGESEGKENKGLLPSSMIFSTDLHSLGQWVQEGPRNVMFETIIKIEKPNHDLNVPIDEDNYDGLNYLTKKSFHQINQTALKGVIQAHSVTGKMPNIVLEFEKMDDEQFGYLVYFFELALAMSAYLLDVNPFNQPGVEVYKYNMFKLLNKPGIK.

Catalysis depends on glutamate 277, which acts as the Proton donor. Active-site residues include histidine 298 and lysine 414.

Belongs to the GPI family.

The protein resides in the cytoplasm. It catalyses the reaction alpha-D-glucose 6-phosphate = beta-D-fructose 6-phosphate. The protein operates within carbohydrate biosynthesis; gluconeogenesis. It participates in carbohydrate degradation; glycolysis; D-glyceraldehyde 3-phosphate and glycerone phosphate from D-glucose: step 2/4. In terms of biological role, catalyzes the reversible isomerization of glucose-6-phosphate to fructose-6-phosphate. The chain is Glucose-6-phosphate isomerase from Mycoplasma capricolum subsp. capricolum (strain California kid / ATCC 27343 / NCTC 10154).